Reading from the N-terminus, the 210-residue chain is Noranthrone monooxygenase (210 aa).

4 consecutive transmembrane segments (helical) span residues 59–79, 105–125, 131–151, and 188–208; these read TGSF…PILI, GIAL…YSVG, WMVA…FMNA, and VRAL…CGVV.

The protein belongs to the anthrone oxygenase family.

Its subcellular location is the membrane. It carries out the reaction noranthrone + O2 = norsolorinic acid + H2O. The protein operates within mycotoxin biosynthesis; aflatoxin biosynthesis. In terms of biological role, monooxygenase that converts norsolorinic acid anthrone to norsolorinic acid during aflatoxin biosynthesis. The protein is Noranthrone monooxygenase (hypC) of Aspergillus flavus (strain ATCC 200026 / FGSC A1120 / IAM 13836 / NRRL 3357 / JCM 12722 / SRRC 167).